Reading from the N-terminus, the 1378-residue chain is High molecular weight rhoptry protein 2 (1378 aa).

The first 19 residues, 1–19 (MIKVTIFLLLSIFSFNLYG), serve as a signal peptide directing secretion. 2 disulfides stabilise this stretch: Cys-46–Cys-71 and Cys-233–Cys-240. Residues 739-759 (FVYASYILGLVFFIESHIDIA) traverse the membrane as a helical segment. 3 cysteine pairs are disulfide-bonded: Cys-791–Cys-851, Cys-871–Cys-912, and Cys-947–Cys-1034.

Component of the RhopH complex. RhopH complex is composed of CLAG3.1/CLAG3.2, RhopH2 and RhopH3 with a 1:1:1 subunit stoichiometry. Interacts with CLAG3.1/CLAG3.2.

The protein resides in the host cell membrane. It localises to the parasitophorous vacuole membrane. Its subcellular location is the host cytoplasm. It is found in the cytoplasm. The protein localises to the cytoplasmic vesicle. The protein resides in the secretory vesicle. It localises to the rhoptry. Functionally, participates in the formation of new permeability pathways in Plasmodium-infected erythrocytes enabling the uptake of nutrients from the blood plasma. Required for maintaining invasion capacity of merozoites. Required for parasite growth and proliferation. The polypeptide is High molecular weight rhoptry protein 2 (Plasmodium falciparum (isolate 3D7)).